A 699-amino-acid polypeptide reads, in one-letter code: Homeobox-leucine zipper protein HDG8 (699 aa).

The tract at residues 1–31 is disordered; the sequence is MDNNGGGSSGNEQYTSGDAKQNGKRTCHRHT. Residues 10–19 show a composition bias toward polar residues; the sequence is GNEQYTSGDA. Residues 22–31 show a composition bias toward basic residues; that stretch reads NGKRTCHRHT. Residues 23–82 constitute a DNA-binding region (homeobox); it reads GKRTCHRHTPQQIQRLEAYFKECPHPDERQRNQLCRELKLEPDQIKFWFQNKRTQSKTQE. Residues 89-149 are a coiled coil; sequence LLRGENETLQ…LKDHRDRISN (61 aa). An START domain is found at 204–438; the sequence is AETDMSLLSE…LERMCERMAL (235 aa).

This sequence belongs to the HD-ZIP homeobox family. Class IV subfamily. In terms of assembly, interacts with ANT. As to expression, expressed in the embryo at early stage and in the endosperm.

The protein resides in the nucleus. Probable transcription factor. The polypeptide is Homeobox-leucine zipper protein HDG8 (Arabidopsis thaliana (Mouse-ear cress)).